A 155-amino-acid chain; its full sequence is Glycosylation-dependent cell adhesion molecule 1 (155 aa).

The first 18 residues, 1–18 (MKFFAVLLLASLAATSLA), serve as a signal peptide directing secretion. Threonine 34 carries an O-linked (GalNAc...) threonine glycan. 5 positions are modified to phosphoserine: serine 48, serine 53, serine 57, serine 59, and serine 65. The interval 74-109 (ARRHQNQNPKLLHPVPQESSFRNTATQSEETKELTP) is disordered. Positions 90-101 (QESSFRNTATQS) are enriched in polar residues.

The protein belongs to the PP3/GlyCAM-1 family. In terms of tissue distribution, highly expressed in whey fraction of camel milk.

This is Glycosylation-dependent cell adhesion molecule 1 (GLYCAM1) from Camelus dromedarius (Dromedary).